The chain runs to 495 residues: Protein painting of fourth (495 aa).

The tract at residues 1 to 51 (MDSKRAALESGDGPDAKRLDTTDDQDKEASGGDGSQVMLAKHVAPYTGHGC) is disordered. Positions 215 to 289 (CSLYVGNIPF…RTLTVRYRRL (75 aa)) constitute an RRM domain. Positions 332-342 (ISDSDNCSDSS) are enriched in low complexity. Disordered stretches follow at residues 332 to 358 (ISDS…INEQ), 432 to 451 (PVPA…KKAK), and 461 to 495 (GPFR…DPDP). The span at 345–358 (GKEDGKRKKKINEQ) shows a compositional bias: basic and acidic residues. A Bipartite nuclear localization signal motif is present at residues 351-367 (RKKKINEQEREIEKLKR). Residues 472-495 (TADEYEKDDRLEELYAQLERDPDP) show a composition bias toward basic and acidic residues.

In terms of assembly, interacts with Zeste. In terms of tissue distribution, weakly expressed in embryos. Expression increases during larval and pupal stages. In adults, it is predominantly expressed in males, while it is weakly expressed in females.

Its subcellular location is the nucleus. The protein localises to the chromosome. Its function is as follows. Probable RNA-binding protein that specifically binds to the fourth chromosome and may bind an RNA that spreads the fourth chromosome. May be a reminiscence of X chromosome dosage compensation of ancestral Drosophila species in which the X and the fourth chromosomes are one single chromosome. This is Protein painting of fourth (Pof) from Drosophila melanogaster (Fruit fly).